Here is a 348-residue protein sequence, read N- to C-terminus: GTPase Obg (348 aa).

The Obg domain occupies 1-159 (MKFLDLAKVY…RTIWLRLKLI (159 aa)). The OBG-type G domain maps to 160 to 327 (ADAGLLGLPN…VLRAVRAEID (168 aa)). Residues 166-173 (GLPNAGKS), 191-195 (FTTLH), 212-215 (DIPG), 279-282 (NKID), and 308-310 (SSV) contribute to the GTP site. Positions 173 and 193 each coordinate Mg(2+).

Belongs to the TRAFAC class OBG-HflX-like GTPase superfamily. OBG GTPase family. As to quaternary structure, monomer. Mg(2+) serves as cofactor.

The protein localises to the cytoplasm. An essential GTPase which binds GTP, GDP and possibly (p)ppGpp with moderate affinity, with high nucleotide exchange rates and a fairly low GTP hydrolysis rate. Plays a role in control of the cell cycle, stress response, ribosome biogenesis and in those bacteria that undergo differentiation, in morphogenesis control. This Ruegeria sp. (strain TM1040) (Silicibacter sp.) protein is GTPase Obg.